The primary structure comprises 1247 residues: Nidogen-1 (1247 aa).

Positions 1–28 are cleaved as a signal peptide; sequence MLASSSRIRAAWTRALLLPLLLAGPVGC. The NIDO domain maps to 106-268; that stretch reads PFLADLDTTD…GVWVFEIGSP (163 aa). Sulfotyrosine occurs at positions 289 and 296. The EGF-like 1 domain occupies 386–426; sequence SRQTCANNRHQCSVHAECRDYATGFCCSCVAGYTGNGRQCV. 19 disulfide bridges follow: C390-C403, C397-C412, C411-C618, C414-C425, C672-C685, C679-C695, C697-C708, C714-C727, C721-C736, C738-C750, C762-C777, C769-C787, C789-C800, C806-C817, C811-C826, C828-C839, C849-C878, C889-C896, and C898-C919. The region spanning 430–667 is the Nidogen G2 beta-barrel domain; sequence SPQRVNGKVK…GPVREGSPDA (238 aa). Residues 668–709 form the EGF-like 2 domain; that stretch reads LQNPCYIGTHGCDTNAACRPGPRTQFTCECSIGFRGDGRTCY. The short motif at 702–704 is the Cell attachment site element; that stretch reads RGD. In terms of domain architecture, EGF-like 3; calcium-binding spans 710–751; it reads DIDECSEQPSVCGSHTICNNHPGTFRCECVEGYQFSDEGTCV. An EGF-like 4 domain is found at 758-801; the sequence is PINYCETGLHNCDIPQRAQCIYTGGSSYTCSCLPGFSGDGQACQ. Residues 802–840 form the EGF-like 5; calcium-binding domain; the sequence is DVDECQPSRCHPDAFCYNTPGSFTCQCKPGYQGDGFRCV. The Thyroglobulin type-1 domain maps to 846 to 919; it reads KTRCQHEREH…RTRPGMTPPC (74 aa). 2 O-linked (GalNAc...) threonine glycosylation sites follow: T922 and T935. 4 LDL-receptor class B repeats span residues 990-1032, 1033-1075, 1076-1120, and 1121-1162; these read KMVY…DHLG, RNIF…DSVR, GNLY…DAFS, and SQLC…YGKN. The 37-residue stretch at 1208–1244 folds into the EGF-like 6 domain; that stretch reads GHNYCSVNNGGCTHLCLATPGSRTCRCPDNTLGVDCI. Intrachain disulfides connect C1212/C1223, C1219/C1232, and C1234/C1243.

In terms of assembly, interacts with FBLN1. Interacts with LGALS3BP. Interacts with PLXDC1. Interacts with SVEP1. N- and O-glycosylated.

It is found in the secreted. The protein resides in the extracellular space. The protein localises to the extracellular matrix. It localises to the basement membrane. Its function is as follows. Sulfated glycoprotein widely distributed in basement membranes and tightly associated with laminin. Also binds to collagen IV and perlecan. It probably has a role in cell-extracellular matrix interactions. The chain is Nidogen-1 (NID1) from Homo sapiens (Human).